Consider the following 260-residue polypeptide: 4-hydroxy-tetrahydrodipicolinate reductase (260 aa).

Residues Gly8–Met13, Glu35, Gly91–Thr93, and Ala115–Met118 each bind NAD(+). The active-site Proton donor/acceptor is His148. His149 serves as a coordination point for (S)-2,3,4,5-tetrahydrodipicolinate. Lys152 acts as the Proton donor in catalysis. Gly158 to Thr159 contributes to the (S)-2,3,4,5-tetrahydrodipicolinate binding site.

It belongs to the DapB family.

The protein resides in the cytoplasm. The enzyme catalyses (S)-2,3,4,5-tetrahydrodipicolinate + NAD(+) + H2O = (2S,4S)-4-hydroxy-2,3,4,5-tetrahydrodipicolinate + NADH + H(+). It catalyses the reaction (S)-2,3,4,5-tetrahydrodipicolinate + NADP(+) + H2O = (2S,4S)-4-hydroxy-2,3,4,5-tetrahydrodipicolinate + NADPH + H(+). It functions in the pathway amino-acid biosynthesis; L-lysine biosynthesis via DAP pathway; (S)-tetrahydrodipicolinate from L-aspartate: step 4/4. In terms of biological role, catalyzes the conversion of 4-hydroxy-tetrahydrodipicolinate (HTPA) to tetrahydrodipicolinate. This is 4-hydroxy-tetrahydrodipicolinate reductase from Rubrobacter xylanophilus (strain DSM 9941 / JCM 11954 / NBRC 16129 / PRD-1).